The sequence spans 361 residues: 3-dehydroquinate synthase (361 aa).

Residues 105 to 109 (GVIGD), 129 to 130 (TT), lysine 142, lysine 151, and 169 to 172 (FLST) each bind NAD(+). Zn(2+) contacts are provided by glutamate 184, histidine 247, and histidine 264.

The protein belongs to the sugar phosphate cyclases superfamily. Dehydroquinate synthase family. Requires Co(2+) as cofactor. Zn(2+) is required as a cofactor. The cofactor is NAD(+).

The protein resides in the cytoplasm. The enzyme catalyses 7-phospho-2-dehydro-3-deoxy-D-arabino-heptonate = 3-dehydroquinate + phosphate. The protein operates within metabolic intermediate biosynthesis; chorismate biosynthesis; chorismate from D-erythrose 4-phosphate and phosphoenolpyruvate: step 2/7. Functionally, catalyzes the conversion of 3-deoxy-D-arabino-heptulosonate 7-phosphate (DAHP) to dehydroquinate (DHQ). The polypeptide is 3-dehydroquinate synthase (Endomicrobium trichonymphae).